Consider the following 122-residue polypeptide: Large ribosomal subunit protein uL14c (122 aa).

Belongs to the universal ribosomal protein uL14 family. As to quaternary structure, part of the 50S ribosomal subunit.

It is found in the plastid. It localises to the chloroplast. Functionally, binds to 23S rRNA. This Populus trichocarpa (Western balsam poplar) protein is Large ribosomal subunit protein uL14c.